The primary structure comprises 175 residues: RNA pyrophosphohydrolase (175 aa).

The Nudix hydrolase domain occupies 6-149 (GYRPNVGIVI…KRDVYRRVMK (144 aa)). The Nudix box motif lies at 38-59 (GGINPGETPEQAMYRELFEEVG).

Belongs to the Nudix hydrolase family. RppH subfamily. A divalent metal cation serves as cofactor.

Its function is as follows. Accelerates the degradation of transcripts by removing pyrophosphate from the 5'-end of triphosphorylated RNA, leading to a more labile monophosphorylated state that can stimulate subsequent ribonuclease cleavage. The protein is RNA pyrophosphohydrolase of Yersinia pseudotuberculosis serotype O:1b (strain IP 31758).